A 711-amino-acid chain; its full sequence is Ribosomal RNA large subunit methyltransferase K/L (711 aa).

Positions Asp-42–Leu-153 constitute a THUMP domain.

This sequence belongs to the methyltransferase superfamily. RlmKL family.

The protein localises to the cytoplasm. It catalyses the reaction guanosine(2445) in 23S rRNA + S-adenosyl-L-methionine = N(2)-methylguanosine(2445) in 23S rRNA + S-adenosyl-L-homocysteine + H(+). The catalysed reaction is guanosine(2069) in 23S rRNA + S-adenosyl-L-methionine = N(2)-methylguanosine(2069) in 23S rRNA + S-adenosyl-L-homocysteine + H(+). Its function is as follows. Specifically methylates the guanine in position 2445 (m2G2445) and the guanine in position 2069 (m7G2069) of 23S rRNA. The chain is Ribosomal RNA large subunit methyltransferase K/L from Xanthomonas oryzae pv. oryzae (strain KACC10331 / KXO85).